The following is a 435-amino-acid chain: Oocyte zinc finger protein XlCOF22 (435 aa).

The tract at residues 71–92 is disordered; the sequence is NANTSAHFSRNRDSDKHERTHT. Positions 80–91 are enriched in basic and acidic residues; sequence RNRDSDKHERTH. C2H2-type zinc fingers lie at residues 97 to 120, 126 to 148, 154 to 176, 182 to 204, 210 to 232, 238 to 260, 266 to 288, 294 to 316, 322 to 345, 351 to 373, 379 to 402, and 408 to 430; these read HSCSQCGKCFSSSSDLLAHRRQSH, FSCSECGKCFSFRSRLIDHQRTH, FCCFQCGKSFSVRSRFLDHRRTH, FSCLECGKCFLFRSRLLEHQRTH, FSCLKCGKCFSVRSRLKDHQRTH, FSCLECGKSFSFRPCLIDHQRTH, FSCFQCGKCFSFQSRLINHQRTH, FSCSECGKSFSNQSCLRVHQRTH, YSCSECGKSFVTSSQLAVHRRRTH, FSCSECGKCFSNQSCLRVHQRTH, FSCSECGKSFVTSSKLASHQRQTH, and VSCSECGKCFTRKRSLKVHFKIH.

Belongs to the krueppel C2H2-type zinc-finger protein family.

The protein localises to the nucleus. In terms of biological role, may be involved in transcriptional regulation. The polypeptide is Oocyte zinc finger protein XlCOF22 (Xenopus laevis (African clawed frog)).